Here is a 507-residue protein sequence, read N- to C-terminus: ATP synthase subunit alpha, chloroplastic (507 aa).

170–177 (GDRQTGKT) serves as a coordination point for ATP.

It belongs to the ATPase alpha/beta chains family. In terms of assembly, F-type ATPases have 2 components, CF(1) - the catalytic core - and CF(0) - the membrane proton channel. CF(1) has five subunits: alpha(3), beta(3), gamma(1), delta(1), epsilon(1). CF(0) has four main subunits: a, b, b' and c.

The protein resides in the plastid. Its subcellular location is the chloroplast thylakoid membrane. The catalysed reaction is ATP + H2O + 4 H(+)(in) = ADP + phosphate + 5 H(+)(out). In terms of biological role, produces ATP from ADP in the presence of a proton gradient across the membrane. The alpha chain is a regulatory subunit. The sequence is that of ATP synthase subunit alpha, chloroplastic from Marchantia polymorpha (Common liverwort).